The primary structure comprises 60 residues: Putative transmembrane protein 74 (60 aa).

A run of 2 helical transmembrane segments spans residues 4–24 (FSVIMYLINSVIFTFMIFLTF) and 35–55 (WVYILIGFFTAIVFHSGYQAG).

Its subcellular location is the host membrane. In Sulfolobus islandicus filamentous virus (isolate Iceland/Hveragerdi) (SIFV), this protein is Putative transmembrane protein 74 (SIFV0074).